A 535-amino-acid chain; its full sequence is Peroxisomal membrane protein PEX29 (535 aa).

Transmembrane regions (helical) follow at residues 139-159 (LSVP…SKPL) and 176-196 (ILLL…PAYM). N-linked (GlcNAc...) asparagine glycosylation is present at Asn-239. A helical membrane pass occupies residues 247 to 267 (MLLYVMSYDFVTSLIVKYLYF). N-linked (GlcNAc...) asparagine glycosylation occurs at Asn-271. The next 2 membrane-spanning stretches (helical) occupy residues 272-292 (ITIF…LFGA) and 297-317 (AMLP…TIAM). Residues Asn-450 and Asn-515 are each glycosylated (N-linked (GlcNAc...) asparagine). The interval 511-535 (AHRRNKSMESSNSLHPVKSIDSVDG) is disordered.

The protein belongs to the PEX28-32 family. PEX29 subfamily.

It localises to the endoplasmic reticulum membrane. With PEX23, contributes to the formation of endoplasmic reticulum-mitochondria junctions which are important for mitochondrial function. Involved in lipid dropplets formation. The protein is Peroxisomal membrane protein PEX29 of Ogataea parapolymorpha (strain ATCC 26012 / BCRC 20466 / JCM 22074 / NRRL Y-7560 / DL-1) (Yeast).